The chain runs to 218 residues: Probable transaldolase (218 aa).

Lys-83 acts as the Schiff-base intermediate with substrate in catalysis.

The protein belongs to the transaldolase family. Type 3B subfamily.

Its subcellular location is the cytoplasm. It catalyses the reaction D-sedoheptulose 7-phosphate + D-glyceraldehyde 3-phosphate = D-erythrose 4-phosphate + beta-D-fructose 6-phosphate. Its pathway is carbohydrate degradation; pentose phosphate pathway; D-glyceraldehyde 3-phosphate and beta-D-fructose 6-phosphate from D-ribose 5-phosphate and D-xylulose 5-phosphate (non-oxidative stage): step 2/3. Its function is as follows. Transaldolase is important for the balance of metabolites in the pentose-phosphate pathway. The polypeptide is Probable transaldolase (Kosmotoga olearia (strain ATCC BAA-1733 / DSM 21960 / TBF 19.5.1)).